The sequence spans 588 residues: MNNSINHKFHHISRAEYQELLAVSRGDAVADYIIDNVSILDLINGGEISGPIVIKGRYIAGVGAEYTDAPALQRIDARGATAVPGFIDAHLHIESSMMTPVTFETATLPRGLTTVICDPHEIVNVMGEAGFAWFARCAEQARQNQYLQVSSCVPALEGCDVNGASFTLEQMLAWRDHPQVTGLAEMMDYPGVISGQNALLDKLDAFRHLTLDGHCPGLGGKELNAYIAAGIENCHESYQLEEGRRKLQLGMSLMIREGSAARNLNALATLINEFNSPQCMLCTDDRNPWEIAHEGHIDALIRRLIEQHNVPLHVAYRVASWSTARHFGLNHLGLLAPGKQADIVLLSDARKVTVQQVLVKGEPIDAQTLQAEESARLAQSAPPYGNTIDRQPVSASDFALQFTPGKRYRVIEAIHNELITHSRSSVYSENGFDRDDVCFIAVLERYGQRLAPACGLLGGFGLNEGALAATVSHDSHNIVVIGRSAEEMALAVNQVIQDGGGLCVVRNGQVQSHLPLPIAGLMSTDTAQSLAEQIDALKAAARECGPLPDEPFIQMAFLSLPVIPALKLTSQGLFDGEKFAFTTLEVTE.

This sequence belongs to the metallo-dependent hydrolases superfamily. Adenine deaminase family. In terms of assembly, homodimer. It depends on Mn(2+) as a cofactor.

It carries out the reaction adenine + H2O + H(+) = hypoxanthine + NH4(+). The sequence is that of Adenine deaminase from Escherichia coli (strain SMS-3-5 / SECEC).